Here is a 237-residue protein sequence, read N- to C-terminus: Intracellular ribonuclease LX (237 aa).

The propeptide occupies 1 to 24 (MMKSQKKLLIKIIVVQCLLVLCVT). Q36 contributes to the RNA binding site. C42 and C48 are oxidised to a cystine. RNA is bound by residues H63, F113, 116–117 (HE), and 120–121 (KH). The Proton donor role is filled by H63. Disulfide bonds link C78-C124, C183-C219, and C199-C210. E117 is an active-site residue. The active-site Proton acceptor is H121.

It belongs to the RNase T2 family.

It localises to the cytoplasm. It carries out the reaction a ribonucleotidyl-ribonucleotide-RNA + H2O = a 3'-end 3'-phospho-ribonucleotide-RNA + a 5'-end dephospho-ribonucleoside-RNA + H(+). In Solanum lycopersicum (Tomato), this protein is Intracellular ribonuclease LX (RNALX).